A 708-amino-acid chain; its full sequence is Solute carrier family 15 member 1 (708 aa).

The helical transmembrane segment at 1-21 threads the bilayer; sequence MGMSKSYGCFGYPLSIFFIVV. At 22–53 the chain is on the extracellular side; the sequence is NEFCERFSYYGMRALLILYFRRFIGWDDNLST. N-linked (GlcNAc...) asparagine glycosylation occurs at asparagine 50. The chain crosses the membrane as a helical span at residues 54–74; it reads AIYHTFVALCYLTPILGALIA. Residues 75–82 are Cytoplasmic-facing; the sequence is DSWLGKFK. Residues 83 to 103 form a helical membrane-spanning segment; it reads TIVSLSIVYTIGQAVTAVSSI. Residues 104–118 lie on the Extracellular side of the membrane; sequence NDLTDYNKDGTPDNL. Residue asparagine 117 is glycosylated (N-linked (GlcNAc...) asparagine). Residues 119–139 form a helical membrane-spanning segment; it reads SVHVALSMIGLALIALGTGGI. Residues 140–161 lie on the Cytoplasmic side of the membrane; sequence KPCVSAFGGDQFEEGQEKQRNR. The chain crosses the membrane as a helical span at residues 162–182; that stretch reads FFSIFYLAINAGSLISTIVTP. Topologically, residues 183–198 are extracellular; the sequence is MLRVHECGIYSQKACY. A helical transmembrane segment spans residues 199–219; that stretch reads PLAFGVPAALMAVSLIVFVIG. Residues 220–276 are Cytoplasmic-facing; sequence SGMYKKFQPQGNVMGKVVKCIGFALKNRFRHRSKQFPKREHWLDWAKEKYDERLISQ. Residues 277 to 297 form a helical membrane-spanning segment; sequence IKMVTKVMFLYIPLPMFWALF. The Extracellular portion of the chain corresponds to 298-327; it reads DQQGSRWTLQATAMSGKIGLLEVQPDQMQT. A helical membrane pass occupies residues 328–348; it reads VNAILIVVMVPIMDAVVYPLI. At 349 to 361 the chain is on the cytoplasmic side; the sequence is AKCGFNFTSLKRM. A helical transmembrane segment spans residues 362–382; sequence TVGMFLASMAFVMAAIVQLEI. Topologically, residues 383 to 584 are extracellular; sequence DKTLPVFPKQ…ISPNTVNMAL (202 aa). An extracellular domain (ECD) region spans residues 383–585; that stretch reads DKTLPVFPKQ…SPNTVNMALQ (203 aa). Asparagine 408, asparagine 439, asparagine 495, asparagine 499, asparagine 509, asparagine 514, asparagine 527, and asparagine 539 each carry an N-linked (GlcNAc...) asparagine glycan. The chain crosses the membrane as a helical span at residues 585–605; sequence QIPQYFLITCGEVVFSVTGLE. Over 606–619 the chain is Cytoplasmic; it reads FSYSQAPSNMKSVL. Residues 620-640 form a helical membrane-spanning segment; sequence QAGWLLTVAVGNIIVLIVAGA. The Extracellular segment spans residues 641-645; it reads GQFSE. Residues 646–666 form a helical membrane-spanning segment; the sequence is QWAEYILFAALLLVVCVIFAI. The Cytoplasmic segment spans residues 667–708; that stretch reads MARFYTYVNPAEIEAQFDDDEKKNLEKMNVYSTVTPVSQTQM.

It belongs to the major facilitator superfamily. Proton-dependent oligopeptide transporter (POT/PTR) (TC 2.A.17) family. In terms of assembly, interacts (via extracellular domain region) with trypsin.

The protein resides in the apical cell membrane. It carries out the reaction a dipeptide(out) + H(+)(out) = a dipeptide(in) + H(+)(in). The enzyme catalyses an L-amino acid tripeptide(out) + H(+)(out) = an L-amino acid tripeptide(in) + H(+)(in). The catalysed reaction is L-alanyl-L-lysine(out) + H(+)(out) = L-alanyl-L-lysine(in) + H(+)(in). It catalyses the reaction L-alanyl-L-proline(out) + H(+)(out) = L-alanyl-L-proline(in) + H(+)(in). It carries out the reaction L-alanyl-L-valine(out) + H(+)(out) = L-alanyl-L-valine(in) + H(+)(in). The enzyme catalyses carnosine(out) + H(+)(out) = carnosine(in) + H(+)(in). The catalysed reaction is glycyl-L-glutamine(out) + H(+)(out) = glycyl-L-glutamine(in) + H(+)(in). It catalyses the reaction glycyl-L-leucine(out) + H(+)(out) = glycyl-L-leucine(in) + H(+)(in). It carries out the reaction glycyl-L-proline(out) + H(+)(out) = glycyl-L-proline(in) + H(+)(in). The enzyme catalyses glycyl-sarcosine(out) + H(+)(out) = glycyl-sarcosine(in) + H(+)(in). The catalysed reaction is L-leucyl-L-leucine(out) + H(+)(out) = L-leucyl-L-leucine(in) + H(+)(in). It catalyses the reaction L-leucyl-L-proline(out) + H(+)(out) = L-leucyl-L-proline(in) + H(+)(in). It carries out the reaction L-phenylalanyl-L-leucine(out) + H(+)(out) = L-phenylalanyl-L-leucine(in) + H(+)(in). The enzyme catalyses L-phenylalanyl-L-phenylalanine(out) + H(+)(out) = L-phenylalanyl-L-phenylalanine(in) + H(+)(in). The catalysed reaction is L-lysyl-glycine(out) + H(+)(out) = L-lysyl-glycine(in) + H(+)(in). It catalyses the reaction L-tyrosylglycine(out) + H(+)(out) = L-tyrosylglycine(in) + H(+)(in). It carries out the reaction L-alanyl-L-aspartate(out) + 2 H(+)(out) = L-alanyl-L-aspartate(in) + 2 H(+)(in). The enzyme catalyses L-aspartyl-glycine(out) + 2 H(+)(out) = L-aspartyl-glycine(in) + 2 H(+)(in). The catalysed reaction is glycyl-L-aspartate(out) + 2 H(+)(out) = glycyl-L-aspartate(in) + 2 H(+)(in). It catalyses the reaction glycyl-L-glutamate(out) + 2 H(+)(out) = glycyl-L-glutamate(in) + 2 H(+)(in). It carries out the reaction L-alanyl-L-leucyl-L-alanine(out) + H(+)(out) = L-alanyl-L-leucyl-L-alanine(in) + H(+)(in). The enzyme catalyses L-alanyl-L-prolylglycine(out) + H(+)(out) = L-alanyl-L-prolylglycine(in) + H(+)(in). The catalysed reaction is glycylglycyl-L-isoleucine(out) + H(+)(out) = glycylglycyl-L-isoleucine(in) + H(+)(in). It catalyses the reaction glycylglycyl-L-proline(out) + H(+)(out) = glycylglycyl-L-proline(in) + H(+)(in). It carries out the reaction L-methionyl-L-phenylalanyl-L-methionine(out) + H(+)(out) = L-methionyl-L-phenylalanyl-L-methionine(in) + H(+)(in). The enzyme catalyses N-acetyl-D-muramoyl-L-alanyl-D-isoglutamine(out) + 2 H(+)(out) = N-acetyl-D-muramoyl-L-alanyl-D-isoglutamine(in) + 2 H(+)(in). The catalysed reaction is N(alpha)-formyl-L-methionyl-L-leucyl-L-phenylalanine(out) + 2 H(+)(out) = N(alpha)-formyl-L-methionyl-L-leucyl-L-phenylalanine(in) + 2 H(+)(in). In terms of biological role, electrogenic proton-coupled amino-acid transporter that transports oligopeptides of 2 to 4 amino acids with a preference for dipeptides. Transports neutral and monovalently charged peptides with a proton to peptide stoichiometry of 1:1 or 2:1. Primarily responsible for the absorption of dietary di- and tripeptides from the small intestinal lumen. Mediates transepithelial transport of muramyl and N-formylated bacterial dipeptides contributing to recognition of pathogenic bacteria by the mucosal immune system. The polypeptide is Solute carrier family 15 member 1 (SLC15A1) (Canis lupus familiaris (Dog)).